The primary structure comprises 363 residues: Heme A synthase (363 aa).

The next 8 helical transmembrane spans lie at 21–41 (ALVR…VLVG), 107–127 (RLLA…FWVS), 138–158 (LVGI…MVAS), 174–194 (HLTL…GLAP), 207–227 (LAGF…LVAG), 268–288 (FVHR…MIAT), 301–321 (ATLL…TLLM), and 323–343 (VPLH…GFAA). His-270 contributes to the heme binding site. His-331 lines the heme pocket.

It belongs to the COX15/CtaA family. Type 2 subfamily. As to quaternary structure, interacts with CtaB. It depends on heme b as a cofactor.

Its subcellular location is the cell membrane. It catalyses the reaction Fe(II)-heme o + 2 A + H2O = Fe(II)-heme a + 2 AH2. It functions in the pathway porphyrin-containing compound metabolism; heme A biosynthesis; heme A from heme O: step 1/1. In terms of biological role, catalyzes the conversion of heme O to heme A by two successive hydroxylations of the methyl group at C8. The first hydroxylation forms heme I, the second hydroxylation results in an unstable dihydroxymethyl group, which spontaneously dehydrates, resulting in the formyl group of heme A. The polypeptide is Heme A synthase (Mesorhizobium japonicum (strain LMG 29417 / CECT 9101 / MAFF 303099) (Mesorhizobium loti (strain MAFF 303099))).